The chain runs to 450 residues: UDP-N-acetylmuramoylalanine--D-glutamate ligase (450 aa).

Position 116-122 (116-122 (GSNGKTT)) interacts with ATP.

The protein belongs to the MurCDEF family.

It is found in the cytoplasm. The catalysed reaction is UDP-N-acetyl-alpha-D-muramoyl-L-alanine + D-glutamate + ATP = UDP-N-acetyl-alpha-D-muramoyl-L-alanyl-D-glutamate + ADP + phosphate + H(+). It participates in cell wall biogenesis; peptidoglycan biosynthesis. Cell wall formation. Catalyzes the addition of glutamate to the nucleotide precursor UDP-N-acetylmuramoyl-L-alanine (UMA). This is UDP-N-acetylmuramoylalanine--D-glutamate ligase from Dechloromonas aromatica (strain RCB).